The following is a 500-amino-acid chain: Chromosomal replication initiator protein DnaA (500 aa).

The tract at residues 1-81 (MVNASGDPVI…LQALRTVTGE (81 aa)) is domain I, interacts with DnaA modulators. The domain II stretch occupies residues 81–155 (ENMFPAFKVV…QQKMNRDPET (75 aa)). The tract at residues 156–377 (HLNKNFTFDS…GALTRVTAVA (222 aa)) is domain III, AAA+ region. G200, G202, K203, and T204 together coordinate ATP. The tract at residues 378–500 (SLSNQPVTRA…TVRLKQSNTN (123 aa)) is domain IV, binds dsDNA.

The protein belongs to the DnaA family. In terms of assembly, oligomerizes as a right-handed, spiral filament on DNA at oriC.

It is found in the cytoplasm. In terms of biological role, plays an essential role in the initiation and regulation of chromosomal replication. ATP-DnaA binds to the origin of replication (oriC) to initiate formation of the DNA replication initiation complex once per cell cycle. Binds the DnaA box (a 9 base pair repeat at the origin) and separates the double-stranded (ds)DNA. Forms a right-handed helical filament on oriC DNA; dsDNA binds to the exterior of the filament while single-stranded (ss)DNA is stabiized in the filament's interior. The ATP-DnaA-oriC complex binds and stabilizes one strand of the AT-rich DNA unwinding element (DUE), permitting loading of DNA polymerase. After initiation quickly degrades to an ADP-DnaA complex that is not apt for DNA replication. Binds acidic phospholipids. This is Chromosomal replication initiator protein DnaA from Bifidobacterium longum subsp. infantis (strain ATCC 15697 / DSM 20088 / JCM 1222 / NCTC 11817 / S12).